The primary structure comprises 446 residues: Inward rectifier potassium channel 4 (446 aa).

At 1–55 (MHGHSRNGQAHVPRRKRRNRFVKKNGQCNVYFANLSNKSQRYMADIFTTCVDTRW) the chain is on the cytoplasmic side. The chain crosses the membrane as a helical span at residues 56–80 (RYMLMIFSAAFLVSWLFFGLLFWCI). Residues 81–120 (AFFHGDLEPSPSGPTAGGPGGNGGGAAPTAAKPCIMHVNG) are Extracellular-facing. The interval 91–111 (PSGPTAGGPGGNGGGAAPTAA) is val/Gly/Ala/Pro stretch. The segment at residues 121–132 (FLGAFLFSVETQ) is an intramembrane region (helical; Pore-forming). Residues 133–139 (TTIGYGF) constitute an intramembrane region (pore-forming). The short motif at 134-139 (TIGYGF) is the Selectivity filter element. Residues 140–148 (RCVTEECPL) lie on the Extracellular side of the membrane. The chain crosses the membrane as a helical span at residues 149–170 (AVIAVVVQSIVGCVIDSFMIGT). The Cytoplasmic segment spans residues 171–446 (IMAKMPRPKK…NISYRRESAI (276 aa)). A PDZ-binding motif is present at residues 444–446 (SAI).

This sequence belongs to the inward rectifier-type potassium channel (TC 1.A.2.1) family. KCNJ4 subfamily. In terms of assembly, homomultimeric and heteromultimeric association with KCNJ2 and KCNJ12. Interacts with DLG2 and DLG4. Associates, via its PDZ-recognition domain, with a complex containing LIN7A, LIN7B, LIN7C, DLG1, CASK and APBA1. Interacts with TAX1BP3. TAX1BP3 competes with LIN7 family members for KCNJ4 binding. As to expression, detected in kidney distal convoluted tubules (at protein level). Widely expressed throughout the brain. Also found in some peripheral tissues.

It localises to the cell membrane. The protein localises to the cytoplasmic vesicle membrane. Its subcellular location is the postsynaptic cell membrane. It carries out the reaction K(+)(in) = K(+)(out). Inward rectifier potassium channels are characterized by a greater tendency to allow potassium to flow into the cell rather than out of it. Their voltage dependence is regulated by the concentration of extracellular potassium; as external potassium is raised, the voltage range of the channel opening shifts to more positive voltages. The inward rectification is mainly due to the blockage of outward current by internal magnesium. Can be blocked by extracellular barium and cesium. This is Inward rectifier potassium channel 4 (Kcnj4) from Rattus norvegicus (Rat).